The primary structure comprises 326 residues: Structural protein ORF326a (326 aa).

The disordered stretch occupies residues 1–28 (MSTTFRGKKEEEEEEEEEKEEKEEELFN). Residues 11 to 26 (EEEEEEEEKEEKEEEL) are compositionally biased toward acidic residues.

It is found in the virion. The polypeptide is Structural protein ORF326a (Acidianus two-tailed virus (ATV)).